Here is a 327-residue protein sequence, read N- to C-terminus: Glycerol-3-phosphate dehydrogenase [NAD(P)+] (327 aa).

The NADPH site is built by Phe13, Arg34, and Lys107. Sn-glycerol 3-phosphate contacts are provided by Lys107 and Gly135. An NADPH-binding site is contributed by Ala139. Residues Lys190, Asp243, Ser253, Arg254, and Asn255 each coordinate sn-glycerol 3-phosphate. Catalysis depends on Lys190, which acts as the Proton acceptor. An NADPH-binding site is contributed by Arg254. NADPH-binding residues include Val276 and Glu277.

The protein belongs to the NAD-dependent glycerol-3-phosphate dehydrogenase family.

It is found in the cytoplasm. The catalysed reaction is sn-glycerol 3-phosphate + NAD(+) = dihydroxyacetone phosphate + NADH + H(+). It catalyses the reaction sn-glycerol 3-phosphate + NADP(+) = dihydroxyacetone phosphate + NADPH + H(+). The protein operates within membrane lipid metabolism; glycerophospholipid metabolism. Functionally, catalyzes the reduction of the glycolytic intermediate dihydroxyacetone phosphate (DHAP) to sn-glycerol 3-phosphate (G3P), the key precursor for phospholipid synthesis. The protein is Glycerol-3-phosphate dehydrogenase [NAD(P)+] of Rhizobium etli (strain ATCC 51251 / DSM 11541 / JCM 21823 / NBRC 15573 / CFN 42).